Here is an 887-residue protein sequence, read N- to C-terminus: MTNNCKITFKNQLKALLGKAILLKKKKRKETITEFTQGIQYIIVLVILHYTIPNVITLNTYSPVGLGYPTSGFPLCYVSNVPFNQTSNLHLLLNSTQLPISQIVQFPNEQSLIDSYKSNPQSITYGISFNNIDYQNNILDYNILLNSTFQNTQLISIVQNLFLSTFAEIKGITTTTTTTLSSIEEFPNLTSSVSVSSYLYVIYLPLLFLFSLQQLLVTSVTERKNHIKEVMKVMGLKELVYWVTIIIVQTITNVINILLVMVVLYFTKTLTTSLNPVMLFLQFLLYSFSMVAIGIILSNLVDTPKTASAISSFLLLILVGVSCFYQFYLKSKTSSSWLRSILFLFSPCAFGEFLYKMGNDQQMMLTTNWSDPQVKISFLFLIIDIFLYFTIAWYITELYKDNTDENSITKSFTFFLSLSYWKSIFNLRSSSSSSSLPLLNNNNNCNNNNTSPSSSSSSQSSPLNKPLLSGDSDDDENDIGIRLVNLKKTYKNPITKETVNAVNDVSYTIKKGTILALLGQNGSGKTSTIGMLNGMRSPSSGDAFINGLSIKYDMDKIRENGIGLCHQSNILYDEFTCAEHIALYSRLKGLFVDGGGANGDNKRIMMDNFIMESLGEVNLVDKKDTQSIKLSGGMKRRLCLAISLIGNPSILLLDEPSSGLDSLSQHMICELLQRKKPNKTIILTTHNLDSAELLGDKICIMTSGKVKAMGSSLELKNQFNLGYILTIVYDKSLSLLQPPNINQQFESFFFNKFNDSTQSKQNLKNIQSFYNIFNNNNNENNSNNSDGSSSSSDSSSSKDVLLNIKNNNNNNNNNEERGFSSGQRDLELEYSLTHQSTDVITEFLEELESRQDEFKIKRISMSMTTLDEVFLKVSEEETINKNKQPTS.

7 helical membrane-spanning segments follow: residues 38 to 58 (GIQY…VITL), 198 to 218 (YLYV…LLVT), 245 to 265 (IIIV…VVLY), 277 to 297 (VMLF…GIIL), 309 to 329 (AISS…QFYL), 335 to 355 (SSWL…EFLY), and 376 to 396 (ISFL…WYIT). The span at 443 to 469 (NNCNNNNTSPSSSSSSQSSPLNKPLLS) shows a compositional bias: low complexity. The tract at residues 443-474 (NNCNNNNTSPSSSSSSQSSPLNKPLLSGDSDD) is disordered. The ABC transporter domain maps to 481–728 (IRLVNLKKTY…FNLGYILTIV (248 aa)). Residue 519–526 (GQNGSGKT) coordinates ATP. The span at 774-797 (NNNNNENNSNNSDGSSSSSDSSSS) shows a compositional bias: low complexity. Residues 774–799 (NNNNNENNSNNSDGSSSSSDSSSSKD) are disordered.

Belongs to the ABC transporter superfamily. ABCA family.

The protein localises to the membrane. This is ABC transporter A family member 10 (abcA10) from Dictyostelium discoideum (Social amoeba).